Here is a 90-residue protein sequence, read N- to C-terminus: Probable Fe(2+)-trafficking protein (90 aa).

Belongs to the Fe(2+)-trafficking protein family.

Functionally, could be a mediator in iron transactions between iron acquisition and iron-requiring processes, such as synthesis and/or repair of Fe-S clusters in biosynthetic enzymes. The protein is Probable Fe(2+)-trafficking protein of Azotobacter vinelandii (strain DJ / ATCC BAA-1303).